The sequence spans 133 residues: UPF0344 protein SH1980 (133 aa).

The next 4 helical transmembrane spans lie at methionine 1–leucine 21, valine 42–alanine 62, methionine 71–isoleucine 91, and leucine 103–tryptophan 123.

It belongs to the UPF0344 family.

It localises to the cell membrane. The protein is UPF0344 protein SH1980 of Staphylococcus haemolyticus (strain JCSC1435).